Consider the following 444-residue polypeptide: Glutamyl-tRNA reductase (444 aa).

Substrate is bound by residues 49–52 (TCNR), Ser-109, 114–116 (ETQ), and Gln-120. Cys-50 serves as the catalytic Nucleophile. Position 189-194 (189-194 (GAGKMG)) interacts with NADP(+).

It belongs to the glutamyl-tRNA reductase family. As to quaternary structure, homodimer.

The enzyme catalyses (S)-4-amino-5-oxopentanoate + tRNA(Glu) + NADP(+) = L-glutamyl-tRNA(Glu) + NADPH + H(+). It functions in the pathway porphyrin-containing compound metabolism; protoporphyrin-IX biosynthesis; 5-aminolevulinate from L-glutamyl-tRNA(Glu): step 1/2. Catalyzes the NADPH-dependent reduction of glutamyl-tRNA(Glu) to glutamate 1-semialdehyde (GSA). This is Glutamyl-tRNA reductase from Bacillus cereus (strain G9842).